The primary structure comprises 306 residues: MKILLIAGGWSPERQVSLNGARAMVPALEARGHEVTFFDLLENFNGLLAAAEQHDFALINLHGAPGEDGLVQAMLDQVGCPYQGAGPAGSFLALNKCAAKQIFRRAGLPTADWDFVPAFPGKDWQPRLPYPLFVKSNTGGSSLRLGRARNRAELDDIMGQIFAAGEEVIMEPVLPGREVTCGILGEDPLPPILIEPVAGDFFNYESKYEQDGARELCPAPIGDELTARVQELTLAAHRALGLRGYSRADFILGPDDSLTLLEVNTLPGMTATSLVPREARTIGLDFGQLLERLMELGLADCKKKQM.

Positions 100–295 (KQIFRRAGLP…FGQLLERLME (196 aa)) constitute an ATP-grasp domain. 127–180 (RLPYPLFVKSNTGGSSLRLGRARNRAELDDIMGQIFAAGEEVIMEPVLPGREVT) is a binding site for ATP. Mg(2+) contacts are provided by Asp-249, Glu-262, and Asn-264.

The protein belongs to the D-alanine--D-alanine ligase family. Mg(2+) is required as a cofactor. The cofactor is Mn(2+).

It localises to the cytoplasm. It catalyses the reaction 2 D-alanine + ATP = D-alanyl-D-alanine + ADP + phosphate + H(+). It functions in the pathway cell wall biogenesis; peptidoglycan biosynthesis. Cell wall formation. The polypeptide is D-alanine--D-alanine ligase (Desulfovibrio desulfuricans (strain ATCC 27774 / DSM 6949 / MB)).